A 119-amino-acid chain; its full sequence is Ribonuclease P protein component (119 aa).

This sequence belongs to the RnpA family. As to quaternary structure, consists of a catalytic RNA component (M1 or rnpB) and a protein subunit.

The enzyme catalyses Endonucleolytic cleavage of RNA, removing 5'-extranucleotides from tRNA precursor.. Its function is as follows. RNaseP catalyzes the removal of the 5'-leader sequence from pre-tRNA to produce the mature 5'-terminus. It can also cleave other RNA substrates such as 4.5S RNA. The protein component plays an auxiliary but essential role in vivo by binding to the 5'-leader sequence and broadening the substrate specificity of the ribozyme. The sequence is that of Ribonuclease P protein component from Yersinia pseudotuberculosis serotype O:1b (strain IP 31758).